We begin with the raw amino-acid sequence, 382 residues long: Palmitoyltransferase ZDHHC16B (382 aa).

The Cytoplasmic portion of the chain corresponds to 1-75 (MRSWRWSVSR…IYWLVDNMTR (75 aa)). The chain crosses the membrane as a helical span at residues 76 to 96 (WFGVVFVCLVMALTSSVVVIV). Residues 97–107 (YLCVLPIIFSS) are Lumenal-facing. Residues 108–130 (YPVYWILWHLCYGHWNLLMVVFH) traverse the membrane as a helical segment. Residues 131-196 (YYKATTTQPG…NNCVGHFNHR (66 aa)) are Cytoplasmic-facing. A DHHC domain is found at 153 to 203 (TICKKCIVPKPARTHHCSICNRCILKMDHHCPWLNNCVGHFNHRYFFSFCL). Residue cysteine 183 is the S-palmitoyl cysteine intermediate of the active site. A helical transmembrane segment spans residues 197-217 (YFFSFCLFMTMGCVYCSISAK). Residues 218–275 (DMFLDAYNAIESGRYKGGASQGEAVPGAGLIYISFQHQSSYQTPPPAFTHQERMVHKS) lie on the Lumenal side of the membrane. Residues 276 to 296 (LVYLWVLTSSVAVALGALTLW) traverse the membrane as a helical segment. Residues 297–382 (HAILITRGET…PAYKSSTTAI (86 aa)) lie on the Cytoplasmic side of the membrane.

Belongs to the DHHC palmitoyltransferase family.

The protein localises to the endoplasmic reticulum membrane. It carries out the reaction L-cysteinyl-[protein] + hexadecanoyl-CoA = S-hexadecanoyl-L-cysteinyl-[protein] + CoA. Functionally, palmitoyl acyltransferase that mediates palmitoylation of proteins and is required during embryonic heart development. Involved in the proliferation of neural stem cells by regulating the FGF/ERK pathway. This Danio rerio (Zebrafish) protein is Palmitoyltransferase ZDHHC16B.